The chain runs to 77 residues: Small ribosomal subunit protein bS20 (77 aa).

Residues 47-77 form a disordered region; sequence ASSSIDKAESKGLIHKNKASRDKARLAAKLG.

The protein belongs to the bacterial ribosomal protein bS20 family.

In terms of biological role, binds directly to 16S ribosomal RNA. This chain is Small ribosomal subunit protein bS20, found in Streptococcus pyogenes serotype M1.